The primary structure comprises 192 residues: Putative 3-methyladenine DNA glycosylase (192 aa).

It belongs to the DNA glycosylase MPG family.

The polypeptide is Putative 3-methyladenine DNA glycosylase (Methanoculleus marisnigri (strain ATCC 35101 / DSM 1498 / JR1)).